Here is a 343-residue protein sequence, read N- to C-terminus: Aspartate-semialdehyde dehydrogenase (343 aa).

NADP(+) contacts are provided by residues 13–16 (TGAV) and 41–42 (KS). A phosphate-binding site is contributed by Arg103. Cys134 (acyl-thioester intermediate) is an active-site residue. Gln161 is a substrate binding site. An NADP(+)-binding site is contributed by 164–165 (SG). Residue Lys220 coordinates phosphate. Residue Arg241 coordinates substrate. The active-site Proton acceptor is the His248. Residue Gln321 coordinates NADP(+).

This sequence belongs to the aspartate-semialdehyde dehydrogenase family. In terms of assembly, homodimer.

The enzyme catalyses L-aspartate 4-semialdehyde + phosphate + NADP(+) = 4-phospho-L-aspartate + NADPH + H(+). It functions in the pathway amino-acid biosynthesis; L-lysine biosynthesis via DAP pathway; (S)-tetrahydrodipicolinate from L-aspartate: step 2/4. The protein operates within amino-acid biosynthesis; L-methionine biosynthesis via de novo pathway; L-homoserine from L-aspartate: step 2/3. Its pathway is amino-acid biosynthesis; L-threonine biosynthesis; L-threonine from L-aspartate: step 2/5. Functionally, catalyzes the NADPH-dependent formation of L-aspartate-semialdehyde (L-ASA) by the reductive dephosphorylation of L-aspartyl-4-phosphate. In Campylobacter jejuni subsp. jejuni serotype O:2 (strain ATCC 700819 / NCTC 11168), this protein is Aspartate-semialdehyde dehydrogenase.